A 204-amino-acid polypeptide reads, in one-letter code: Somatotropin (204 aa).

The N-terminal stretch at 1 to 17 (MDRAVLLLSVLSLGVSS) is a signal peptide. Gln-18 bears the Pyrrolidone carboxylic acid mark. Residue His-35 coordinates Zn(2+). A disulfide bond links Cys-69 and Cys-177. Glu-186 serves as a coordination point for Zn(2+). An intrachain disulfide couples Cys-194 to Cys-202.

This sequence belongs to the somatotropin/prolactin family.

Its subcellular location is the secreted. Its function is as follows. Growth hormone plays an important role in growth control and is involved in the regulation of several anabolic processes. Implicated as an osmoregulatory substance important for seawater adaptation. This Morone saxatilis (Striped bass) protein is Somatotropin (gh).